Reading from the N-terminus, the 201-residue chain is Ephrin-A4 (201 aa).

The N-terminal stretch at 1 to 25 (MRLLPLLRTVLWAAFLGSPLRGGSS) is a signal peptide. The region spanning 26–155 (LRHVVYWNSS…RLQVSVCCKE (130 aa)) is the Ephrin RBD domain. N-linked (GlcNAc...) asparagine glycosylation is present at Asn-33. Cystine bridges form between Cys-58–Cys-99 and Cys-86–Cys-144. Ser-170 carries GPI-anchor amidated serine lipidation. Positions 171-201 (GTSGWRGGDTPSPLCLLLLLLLLILRLLRIL) are cleaved as a propeptide — removed in mature form.

Belongs to the ephrin family. Expressed in the adult spleen, lymph node, prostate, ovary, small intestine, and colon, and in fetal heart, lung, liver and kidney. Also detected in hematopoietic cell lines.

Its subcellular location is the cell membrane. The protein localises to the secreted. Functionally, cell surface GPI-bound ligand for Eph receptors, a family of receptor tyrosine kinases which are crucial for migration, repulsion and adhesion during neuronal, vascular and epithelial development. Binds promiscuously Eph receptors residing on adjacent cells, leading to contact-dependent bidirectional signaling into neighboring cells. May play a role in the interaction between activated B-lymphocytes and dendritic cells in tonsils. The protein is Ephrin-A4 (EFNA4) of Homo sapiens (Human).